The primary structure comprises 153 residues: Nucleoside diphosphate kinase (153 aa).

Residues Lys13, Phe61, Arg89, Thr95, Arg106, and Asn116 each contribute to the ATP site. Residue Thr95 is modified to Phosphothreonine. His119 (pros-phosphohistidine intermediate) is an active-site residue.

This sequence belongs to the NDK family. In terms of assembly, homohexamer and homotetramer. Interacts with TOM40 preferentially in an unfolded, unphosphorylated form. The cofactor is Mg(2+). In terms of processing, the N-terminus is blocked.

It is found in the cytoplasm. It localises to the mitochondrion intermembrane space. It catalyses the reaction a 2'-deoxyribonucleoside 5'-diphosphate + ATP = a 2'-deoxyribonucleoside 5'-triphosphate + ADP. The enzyme catalyses a ribonucleoside 5'-diphosphate + ATP = a ribonucleoside 5'-triphosphate + ADP. Major role in the synthesis of nucleoside triphosphates other than ATP. The ATP gamma phosphate is transferred to the NDP beta phosphate via a ping-pong mechanism, using a phosphorylated active-site intermediate. Required for repair of UV radiation- and etoposide-induced DNA damage. This chain is Nucleoside diphosphate kinase (YNK1), found in Saccharomyces cerevisiae (strain ATCC 204508 / S288c) (Baker's yeast).